Consider the following 223-residue polypeptide: Ribonuclease 3 (223 aa).

One can recognise an RNase III domain in the interval 1–131 (MDGVDELLLR…LIGAVMVDQG (131 aa)). E44 contacts Mg(2+). Residue D48 is part of the active site. 2 residues coordinate Mg(2+): D117 and E120. E120 is an active-site residue. The DRBM domain occupies 157–220 (DPKTKLQKLT…AMSALASLEN (64 aa)).

This sequence belongs to the ribonuclease III family. Homodimer. It depends on Mg(2+) as a cofactor.

The protein localises to the cytoplasm. The enzyme catalyses Endonucleolytic cleavage to 5'-phosphomonoester.. In terms of biological role, digests double-stranded RNA. Involved in the processing of primary rRNA transcript to yield the immediate precursors to the large and small rRNAs (23S and 16S). Processes some mRNAs, and tRNAs when they are encoded in the rRNA operon. Processes pre-crRNA and tracrRNA of type II CRISPR loci if present in the organism. The chain is Ribonuclease 3 from Tropheryma whipplei (strain Twist) (Whipple's bacillus).